The chain runs to 87 residues: Defensin-A (87 aa).

A signal peptide spans 1 to 19 (MKFYLVLAFLTLCAVAVTA). The propeptide occupies 20 to 44 (LPAGDETRIDLETLEEDLRLVDGAQ). Cystine bridges form between cysteine 57/cysteine 78, cysteine 64/cysteine 83, and cysteine 68/cysteine 85.

Hemolymph and fat body.

It localises to the secreted. Its function is as follows. Antibacterial peptide mostly active against Gram-positive and Gram negative bacteria. This is Defensin-A from Glossina morsitans morsitans (Savannah tsetse fly).